The sequence spans 350 residues: Phosphotriesterase-related protein (350 aa).

His22, His24, Glu169, His201, His230, and Asp298 together coordinate a divalent metal cation.

This sequence belongs to the metallo-dependent hydrolases superfamily. Phosphotriesterase family. Requires a divalent metal cation as cofactor.

The chain is Phosphotriesterase-related protein from Drosophila ananassae (Fruit fly).